The chain runs to 188 residues: Mediator of RNA polymerase II transcription subunit 11 (188 aa).

Residues 46–72 (KNKMEDNANNFKKLITQVENELSAQMQ) adopt a coiled-coil conformation. The interval 116–188 (DPTSDEPQTT…MTDDDDDMEQ (73 aa)) is disordered. A compositionally biased stretch (acidic residues) spans 123–141 (QTTEEDEEDGSDDLNEDGA). Over residues 146-155 (SSTVTSSTTD) the composition is skewed to low complexity. Positions 171–180 (SQEESGRQMT) are enriched in basic and acidic residues.

The protein belongs to the Mediator complex subunit 11 family. In terms of assembly, component of the Mediator complex.

The protein resides in the nucleus. Functionally, component of the Mediator complex, a coactivator involved in the regulated transcription of nearly all RNA polymerase II-dependent genes. Mediator functions as a bridge to convey information from gene-specific regulatory proteins to the basal RNA polymerase II transcription machinery. Mediator is recruited to promoters by direct interactions with regulatory proteins and serves as a scaffold for the assembly of a functional pre-initiation complex with RNA polymerase II and the general transcription factors. The polypeptide is Mediator of RNA polymerase II transcription subunit 11 (mdt-11) (Caenorhabditis elegans).